We begin with the raw amino-acid sequence, 304 residues long: Elongation factor Ts (304 aa).

The segment at Thr-82–Val-85 is involved in Mg(2+) ion dislocation from EF-Tu.

It belongs to the EF-Ts family.

It is found in the cytoplasm. Its function is as follows. Associates with the EF-Tu.GDP complex and induces the exchange of GDP to GTP. It remains bound to the aminoacyl-tRNA.EF-Tu.GTP complex up to the GTP hydrolysis stage on the ribosome. The protein is Elongation factor Ts of Symbiobacterium thermophilum (strain DSM 24528 / JCM 14929 / IAM 14863 / T).